A 571-amino-acid polypeptide reads, in one-letter code: Putative clathrin assembly protein At2g01600 (571 aa).

An ENTH domain is found at 24–161 (RVNSEYADLD…ECFRVLKYDT (138 aa)). 2 disordered regions span residues 325 to 346 (YRPD…REML) and 474 to 571 (PAPN…TGLI). Over residues 337–346 (EPSHEEREML) the composition is skewed to basic and acidic residues. Positions 508-522 (QQTYQHQPQPTYQHQ) are enriched in low complexity. 2 stretches are compositionally biased toward polar residues: residues 523–532 (SNPPTNNSNP) and 543–571 (PVSQ…TGLI).

It is found in the membrane. Its subcellular location is the clathrin-coated pit. The protein resides in the golgi apparatus. The protein localises to the cytoplasmic vesicle. It localises to the clathrin-coated vesicle. This is Putative clathrin assembly protein At2g01600 from Arabidopsis thaliana (Mouse-ear cress).